Consider the following 73-residue polypeptide: Protein SlyX homolog (73 aa).

Residues Leu-54–Tyr-73 are disordered. The span at Ala-57 to Asn-67 shows a compositional bias: low complexity.

The protein belongs to the SlyX family.

The protein is Protein SlyX homolog of Rhodopseudomonas palustris (strain BisA53).